Reading from the N-terminus, the 143-residue chain is Nucleoside diphosphate kinase (143 aa).

ATP is bound by residues K11, F59, R87, T93, R104, and N114. H117 (pros-phosphohistidine intermediate) is an active-site residue.

This sequence belongs to the NDK family. Homotetramer. The cofactor is Mg(2+).

It localises to the cytoplasm. The enzyme catalyses a 2'-deoxyribonucleoside 5'-diphosphate + ATP = a 2'-deoxyribonucleoside 5'-triphosphate + ADP. It catalyses the reaction a ribonucleoside 5'-diphosphate + ATP = a ribonucleoside 5'-triphosphate + ADP. Major role in the synthesis of nucleoside triphosphates other than ATP. The ATP gamma phosphate is transferred to the NDP beta phosphate via a ping-pong mechanism, using a phosphorylated active-site intermediate. This is Nucleoside diphosphate kinase from Shewanella pealeana (strain ATCC 700345 / ANG-SQ1).